Reading from the N-terminus, the 81-residue chain is ATP synthase subunit c (81 aa).

2 helical membrane-spanning segments follow: residues 7–27 and 57–77; these read AASVLAAALAVGLAAIGPGIG and LAFMEALTIYGLVVALVLLFA.

The protein belongs to the ATPase C chain family. As to quaternary structure, F-type ATPases have 2 components, F(1) - the catalytic core - and F(0) - the membrane proton channel. F(1) has five subunits: alpha(3), beta(3), gamma(1), delta(1), epsilon(1). F(0) has four main subunits: a(1), b(1), b'(1) and c(10-14). The alpha and beta chains form an alternating ring which encloses part of the gamma chain. F(1) is attached to F(0) by a central stalk formed by the gamma and epsilon chains, while a peripheral stalk is formed by the delta, b and b' chains.

Its subcellular location is the cellular thylakoid membrane. Its function is as follows. F(1)F(0) ATP synthase produces ATP from ADP in the presence of a proton or sodium gradient. F-type ATPases consist of two structural domains, F(1) containing the extramembraneous catalytic core and F(0) containing the membrane proton channel, linked together by a central stalk and a peripheral stalk. During catalysis, ATP synthesis in the catalytic domain of F(1) is coupled via a rotary mechanism of the central stalk subunits to proton translocation. Functionally, key component of the F(0) channel; it plays a direct role in translocation across the membrane. A homomeric c-ring of between 10-14 subunits forms the central stalk rotor element with the F(1) delta and epsilon subunits. The polypeptide is ATP synthase subunit c (Synechococcus elongatus (strain ATCC 33912 / PCC 7942 / FACHB-805) (Anacystis nidulans R2)).